A 1471-amino-acid chain; its full sequence is ABC multidrug transporter F (1471 aa).

Positions 1–19 (MALNSTDNRWSTGEDTPSE) are enriched in polar residues. Residues 1–40 (MALNSTDNRWSTGEDTPSEAQLPDGEERLDAAPDEKVTAE) are disordered. N4 carries an N-linked (GlcNAc...) asparagine glycan. The span at 25 to 40 (GEERLDAAPDEKVTAE) shows a compositional bias: basic and acidic residues. 2 N-linked (GlcNAc...) asparagine glycosylation sites follow: N71 and N311. The 255-residue stretch at 133-387 (LKVPTMVRQA…FEQLGFQCPE (255 aa)) folds into the ABC transporter 1 domain. A helical transmembrane segment spans residues 498 to 518 (VTLAMLIGNFFEALIIASIFY). The N-linked (GlcNAc...) asparagine glycan is linked to N519. A run of 5 helical transmembrane segments spans residues 532-552 (ALLF…ILTL), 578-598 (FIMS…TLYF), 607-627 (GPFF…SMFF), 641-661 (LAPS…TIPV), and 751-771 (IIIA…ELVA). Residues 791-819 (RAKQGQRDEEQPSASAVPSEKYSEAPTPV) form a disordered region. In terms of domain architecture, ABC transporter 2 spans 829 to 1071 (FHWEDVCYDV…TLMDYFVRNG (243 aa)). N-linked (GlcNAc...) asparagine glycosylation occurs at N842. Position 865 to 872 (865 to 872 (GVSGAGKT)) interacts with ATP. 5 consecutive transmembrane segments (helical) span residues 1167–1187 (YLYS…FSFF), 1201–1221 (FGVF…IPTF), 1252–1272 (FAWN…PVGL), 1288–1308 (LVFL…HLLI), and 1326–1346 (IMMY…GFWI). N1386, N1422, and N1429 each carry an N-linked (GlcNAc...) asparagine glycan. Residues 1441-1461 (FGLLWVYVAVNTFGAVFLYWL) traverse the membrane as a helical segment.

This sequence belongs to the ABC transporter superfamily. ABCG family. PDR (TC 3.A.1.205) subfamily.

The protein resides in the cell membrane. The enzyme catalyses fluconazole(in) + ATP + H2O = fluconazole(out) + ADP + phosphate + H(+). It carries out the reaction itraconazole(in) + ATP + H2O = itraconazole(out) + ADP + phosphate + H(+). With respect to regulation, the efflux inhibitor FK506 impairs the transport activity. Its function is as follows. Pleiotropic ABC efflux transporter that shows a strong substrate specificity for the azole class of drugs such as lotrimazole (CLT), fluconazole (FLC), itraconazole (ITC), ketoconazole (KTC), posaconazole (POS), econazole (ECON), metconazole (MET), miconazole (MCZ), prochloraz (PCLZ), and tebuconazole (TEBZ). This Aspergillus fumigatus (strain ATCC MYA-4609 / CBS 101355 / FGSC A1100 / Af293) (Neosartorya fumigata) protein is ABC multidrug transporter F.